The primary structure comprises 178 residues: ATP-dependent protease subunit HslV (178 aa).

Threonine 7 is an active-site residue. Na(+) is bound by residues glycine 162, cysteine 165, and threonine 168.

This sequence belongs to the peptidase T1B family. HslV subfamily. In terms of assembly, a double ring-shaped homohexamer of HslV is capped on each side by a ring-shaped HslU homohexamer. The assembly of the HslU/HslV complex is dependent on binding of ATP.

The protein resides in the cytoplasm. It carries out the reaction ATP-dependent cleavage of peptide bonds with broad specificity.. Its activity is regulated as follows. Allosterically activated by HslU binding. Functionally, protease subunit of a proteasome-like degradation complex believed to be a general protein degrading machinery. This chain is ATP-dependent protease subunit HslV, found in Burkholderia multivorans (strain ATCC 17616 / 249).